A 394-amino-acid polypeptide reads, in one-letter code: DNA primase large subunit PriL (394 aa).

[4Fe-4S] cluster-binding residues include C231, C340, C351, and C357.

The protein belongs to the eukaryotic-type primase large subunit family. As to quaternary structure, heterodimer of a small subunit (PriS) and a large subunit (PriL). [4Fe-4S] cluster serves as cofactor.

Functionally, regulatory subunit of DNA primase, an RNA polymerase that catalyzes the synthesis of short RNA molecules used as primers for DNA polymerase during DNA replication. Stabilizes and modulates the activity of the small subunit, increasing the rate of DNA synthesis, and conferring RNA synthesis capability. The DNA polymerase activity may enable DNA primase to also catalyze primer extension after primer synthesis. May also play a role in DNA repair. The polypeptide is DNA primase large subunit PriL (Pyrococcus horikoshii (strain ATCC 700860 / DSM 12428 / JCM 9974 / NBRC 100139 / OT-3)).